The following is a 445-amino-acid chain: N-succinylarginine dihydrolase (445 aa).

Substrate is bound by residues 19–28, asparagine 110, and 137–138; these read AGLSYGNVAS and HR. Glutamate 174 is an active-site residue. Arginine 214 is a binding site for substrate. Histidine 250 is an active-site residue. Substrate contacts are provided by aspartate 252 and asparagine 363. The Nucleophile role is filled by cysteine 369.

This sequence belongs to the succinylarginine dihydrolase family. In terms of assembly, homodimer.

The catalysed reaction is N(2)-succinyl-L-arginine + 2 H2O + 2 H(+) = N(2)-succinyl-L-ornithine + 2 NH4(+) + CO2. It participates in amino-acid degradation; L-arginine degradation via AST pathway; L-glutamate and succinate from L-arginine: step 2/5. In terms of biological role, catalyzes the hydrolysis of N(2)-succinylarginine into N(2)-succinylornithine, ammonia and CO(2). In Shewanella loihica (strain ATCC BAA-1088 / PV-4), this protein is N-succinylarginine dihydrolase.